The following is a 215-amino-acid chain: Octanoyltransferase (215 aa).

Residues Pro31 to Glu206 form the BPL/LPL catalytic domain. Residues Arg70–His77, Ser137–Gly139, and Gly150–Ala152 contribute to the substrate site. The active-site Acyl-thioester intermediate is the Cys168.

It belongs to the LipB family.

Its subcellular location is the cytoplasm. The catalysed reaction is octanoyl-[ACP] + L-lysyl-[protein] = N(6)-octanoyl-L-lysyl-[protein] + holo-[ACP] + H(+). Its pathway is protein modification; protein lipoylation via endogenous pathway; protein N(6)-(lipoyl)lysine from octanoyl-[acyl-carrier-protein]: step 1/2. Functionally, catalyzes the transfer of endogenously produced octanoic acid from octanoyl-acyl-carrier-protein onto the lipoyl domains of lipoate-dependent enzymes. Lipoyl-ACP can also act as a substrate although octanoyl-ACP is likely to be the physiological substrate. The chain is Octanoyltransferase from Pseudomonas putida (strain ATCC 700007 / DSM 6899 / JCM 31910 / BCRC 17059 / LMG 24140 / F1).